A 51-amino-acid chain; its full sequence is Large ribosomal subunit protein bL33 (51 aa).

It belongs to the bacterial ribosomal protein bL33 family.

This Francisella philomiragia subsp. philomiragia (strain ATCC 25017 / CCUG 19701 / FSC 153 / O#319-036) protein is Large ribosomal subunit protein bL33.